Reading from the N-terminus, the 313-residue chain is C-type lectin domain-containing protein 162 (313 aa).

Positions 1 to 17 (MNIFTLLFIYFLSDTVA) are cleaved as a signal peptide. 2 N-linked (GlcNAc...) asparagine glycosylation sites follow: N28 and N41. The 118-residue stretch at 28 to 145 (NATGCFQFFR…DAMFLPFVCE (118 aa)) folds into the C-type lectin domain. Cysteines 49 and 144 form a disulfide. N213 is a glycosylation site (N-linked (GlcNAc...) asparagine). A disordered region spans residues 244–313 (VSQTETEMSR…RSKTIQISRG (70 aa)). A compositionally biased stretch (basic and acidic residues) spans 250 to 259 (EMSRSRKEKE). 2 N-linked (GlcNAc...) asparagine glycosylation sites follow: N279 and N300. Over residues 291-304 (SKEKREREENETIR) the composition is skewed to basic and acidic residues.

Its subcellular location is the secreted. This is C-type lectin domain-containing protein 162 (clec-162) from Caenorhabditis elegans.